The sequence spans 803 residues: Regulatory protein SWI6 (803 aa).

Residues 108–117 are compositionally biased toward acidic residues; the sequence is EPETDQDEED. Residues 108 to 150 are disordered; the sequence is EPETDQDEEDPSHSKLPENKTKSENSKDNISSKRINNLQDMSL. A compositionally biased stretch (basic and acidic residues) spans 118–138; it reads PSHSKLPENKTKSENSKDNIS. A compositionally biased stretch (polar residues) spans 139-149; that stretch reads SKRINNLQDMS. Ser-149 is subject to Phosphoserine. Residue Ser-160 is modified to Phosphoserine; by CDC28. Disordered regions lie at residues 169 to 212 and 266 to 288; these read TSVI…RTAG and PTSL…QQQQ. Phosphoserine is present on Ser-176. A phosphothreonine mark is found at Thr-179 and Thr-182. Positions 270–288 are enriched in low complexity; sequence NNDSSNRNSEGGSSNQQQQ. ANK repeat units follow at residues 318 to 346, 347 to 383, 384 to 469, 470 to 498, and 499 to 514; these read GNTP…NRLY, GDNM…CLIL, EDSM…QDSN, GDTC…DPFI, and ANKS…AGTS. The segment at 512-540 is disordered; that stretch reads GTSKLQNTNGGDENSKMVSKGDYDGQKNG. Residues 514 to 523 show a composition bias toward polar residues; sequence SKLQNTNGGD. A compositionally biased stretch (basic and acidic residues) spans 524 to 538; it reads ENSKMVSKGDYDGQK. Phosphoserine is present on Ser-547.

Component of the transcription complex MCB-binding factor (MBF) composed of SWI6 and MBP1. Component of the transcription complex SCB-binding factor (SBF) composed of SWI6 and SWI4. Interacts with MSA1 and STB1. Phosphorylated by CDC28 and dephosphorylated by CDC14.

The protein resides in the nucleus. It localises to the cytoplasm. Its function is as follows. Part of a complex involved in cell-cycle-dependent transcription. SWI4 and SWI6 are required for formation of the cell-cycle box factor-DNA complex. The repeated element in the upstream region of HO (5'-CACGAAAA-3') is called the cell cycle box (CCB). This chain is Regulatory protein SWI6 (SWI6), found in Saccharomyces cerevisiae (strain ATCC 204508 / S288c) (Baker's yeast).